The sequence spans 141 residues: Nucleoside diphosphate kinase (141 aa).

ATP contacts are provided by K11, F59, R87, T93, R104, and N114. H117 (pros-phosphohistidine intermediate) is an active-site residue.

Belongs to the NDK family. It depends on Mg(2+) as a cofactor.

It is found in the cytoplasm. The enzyme catalyses a 2'-deoxyribonucleoside 5'-diphosphate + ATP = a 2'-deoxyribonucleoside 5'-triphosphate + ADP. It catalyses the reaction a ribonucleoside 5'-diphosphate + ATP = a ribonucleoside 5'-triphosphate + ADP. Major role in the synthesis of nucleoside triphosphates other than ATP. The ATP gamma phosphate is transferred to the NDP beta phosphate via a ping-pong mechanism, using a phosphorylated active-site intermediate. The sequence is that of Nucleoside diphosphate kinase from Staphylothermus marinus (strain ATCC 43588 / DSM 3639 / JCM 9404 / F1).